The following is a 478-amino-acid chain: 3-isopropylmalate dehydratase large subunit (478 aa).

[4Fe-4S] cluster-binding residues include Cys355, Cys415, and Cys418.

This sequence belongs to the aconitase/IPM isomerase family. LeuC type 1 subfamily. As to quaternary structure, heterodimer of LeuC and LeuD. [4Fe-4S] cluster is required as a cofactor.

The catalysed reaction is (2R,3S)-3-isopropylmalate = (2S)-2-isopropylmalate. Its pathway is amino-acid biosynthesis; L-leucine biosynthesis; L-leucine from 3-methyl-2-oxobutanoate: step 2/4. In terms of biological role, catalyzes the isomerization between 2-isopropylmalate and 3-isopropylmalate, via the formation of 2-isopropylmaleate. The sequence is that of 3-isopropylmalate dehydratase large subunit from Paracoccus denitrificans (strain Pd 1222).